Here is a 74-residue protein sequence, read N- to C-terminus: Homeobox protein H40 (74 aa).

The homeobox DNA-binding region spans 8–67 (ARRARTAFTYEQLVALENKFKTTRYLSVCERLNLALSLSLTETQVKIWFQNRRTKWKKQN).

It is found in the nucleus. The sequence is that of Homeobox protein H40 from Apis mellifera (Honeybee).